Consider the following 336-residue polypeptide: uncharacterized protein (336 aa).

This sequence to bacterial alkanal monooxygenase alpha and beta chains.

This is an uncharacterized protein from Bacillus subtilis (strain 168).